Consider the following 459-residue polypeptide: Putrescine aminotransferase (459 aa).

Pyridoxal 5'-phosphate is bound by residues 150-151 (GT) and Gln274. Lys300 is subject to N6-(pyridoxal phosphate)lysine. Thr332 contacts pyridoxal 5'-phosphate.

It belongs to the class-III pyridoxal-phosphate-dependent aminotransferase family. Putrescine aminotransferase subfamily. It depends on pyridoxal 5'-phosphate as a cofactor.

The enzyme catalyses an alkane-alpha,omega-diamine + 2-oxoglutarate = an omega-aminoaldehyde + L-glutamate. It catalyses the reaction putrescine + 2-oxoglutarate = 1-pyrroline + L-glutamate + H2O. It carries out the reaction cadaverine + 2-oxoglutarate = 5-aminopentanal + L-glutamate. It participates in amine and polyamine degradation; putrescine degradation; 4-aminobutanal from putrescine (transaminase route): step 1/1. In terms of biological role, catalyzes the aminotransferase reaction from putrescine to 2-oxoglutarate, leading to glutamate and 4-aminobutanal, which spontaneously cyclizes to form 1-pyrroline. This is the first step in one of two pathways for putrescine degradation, where putrescine is converted into 4-aminobutanoate (gamma-aminobutyrate or GABA) via 4-aminobutanal. Also functions as a cadaverine transaminase in a a L-lysine degradation pathway to succinate that proceeds via cadaverine, glutarate and L-2-hydroxyglutarate. The polypeptide is Putrescine aminotransferase (Escherichia fergusonii (strain ATCC 35469 / DSM 13698 / CCUG 18766 / IAM 14443 / JCM 21226 / LMG 7866 / NBRC 102419 / NCTC 12128 / CDC 0568-73)).